Consider the following 506-residue polypeptide: Chorion-specific transcription factor GCMb (506 aa).

The segment at residues 19–174 is a DNA-binding region (GCM); sequence LSWDINDPQM…KSETEARRSA (156 aa). Cys-81, Cys-87, Cys-91, Cys-118, Cys-121, Cys-130, His-157, and His-159 together coordinate Zn(2+). Positions 155 to 172 are enriched in basic and acidic residues; the sequence is GVHDHPRPESKSETEARR. The segment at 155–213 is disordered; the sequence is GVHDHPRPESKSETEARRSAIKRQMASFYQPQKKRIRESEAEENQDSSGHFSNIPPLEN. The tract at residues 379-395 is C-terminal conserved inhibitory domain (CCID); the sequence is LQTVITTTTKVSYQAYQ.

It localises to the nucleus. Transcription factor that binds specific sequences on gene promoters and activate their transcription. Through the regulation of gene transcription, may play a role in parathyroid gland development. The protein is Chorion-specific transcription factor GCMb of Homo sapiens (Human).